Reading from the N-terminus, the 213-residue chain is Orotate phosphoribosyltransferase (213 aa).

Lys26 is a 5-phospho-alpha-D-ribose 1-diphosphate binding site. 34 to 35 (FF) is an orotate binding site. 5-phospho-alpha-D-ribose 1-diphosphate is bound by residues 72 to 73 (YK), Arg99, Lys100, Lys103, His105, and 124 to 132 (DDVITAGTA). Residues Thr128 and Arg156 each coordinate orotate.

This sequence belongs to the purine/pyrimidine phosphoribosyltransferase family. PyrE subfamily. In terms of assembly, homodimer. Requires Mg(2+) as cofactor.

It catalyses the reaction orotidine 5'-phosphate + diphosphate = orotate + 5-phospho-alpha-D-ribose 1-diphosphate. It functions in the pathway pyrimidine metabolism; UMP biosynthesis via de novo pathway; UMP from orotate: step 1/2. Its function is as follows. Catalyzes the transfer of a ribosyl phosphate group from 5-phosphoribose 1-diphosphate to orotate, leading to the formation of orotidine monophosphate (OMP). This Saccharophagus degradans (strain 2-40 / ATCC 43961 / DSM 17024) protein is Orotate phosphoribosyltransferase.